Here is a 540-residue protein sequence, read N- to C-terminus: Fumonisin B1 esterase (540 aa).

The active-site Acyl-ester intermediate is serine 240. Residues glutamate 356 and histidine 448 each act as charge relay system in the active site. Residues 521–540 (QVGSGEGLGVSPSKACQPSK) are disordered.

The protein belongs to the type-B carboxylesterase/lipase family.

It catalyses the reaction fumonisin B1 + 2 H2O = 2 tricarballylate + (2S,3S,5R,10R,12S,14S,15R,16R)-2-amino-12,16-dimethylicosane-3,5,10,14,15-pentol + 2 H(+). Functionally, involved in degradation of fumonisin B1. Catalyzes the hydrolysis of fumonisin B1 (FB1) to aminopentol (HFB1). The sequence is that of Fumonisin B1 esterase (fumD) from Sphingopyxis macrogoltabida (Sphingomonas macrogoltabidus).